The chain runs to 484 residues: Adenylosuccinate synthetase, chloroplastic (484 aa).

The N-terminal 44 residues, 1-44, are a transit peptide targeting the chloroplast; the sequence is MSLSTLSHPAAAAAGSGKSLFPAGPAAQSVHFPKARLPVPAAVS. GTP is bound by residues 71–77 and 99–101; these read GDEGKGK and GHT. Aspartate 72 serves as the catalytic Proton acceptor. Positions 72 and 99 each coordinate Mg(2+). IMP-binding positions include 72–75, 97–100, threonine 189, arginine 203, glutamine 283, threonine 298, and arginine 362; these read DEGK and NAGH. Histidine 100 functions as the Proton donor in the catalytic mechanism. 358 to 364 contributes to the substrate binding site; the sequence is TTTGRPR. Residues arginine 364, 390-392, and 473-475 contribute to the GTP site; these read KLD and GVG.

It belongs to the adenylosuccinate synthetase family. In terms of assembly, homodimer. Mg(2+) is required as a cofactor.

The protein resides in the plastid. The protein localises to the chloroplast. It carries out the reaction IMP + L-aspartate + GTP = N(6)-(1,2-dicarboxyethyl)-AMP + GDP + phosphate + 2 H(+). It participates in purine metabolism; AMP biosynthesis via de novo pathway; AMP from IMP: step 1/2. In terms of biological role, plays an important role in the de novo pathway and in the salvage pathway of purine nucleotide biosynthesis. Catalyzes the first committed step in the biosynthesis of AMP from IMP. The sequence is that of Adenylosuccinate synthetase, chloroplastic from Zea mays (Maize).